Here is a 573-residue protein sequence, read N- to C-terminus: Sulfate adenylyltransferase (573 aa).

An N-terminal region spans residues 1-169 (MANSPHGGVL…LEAVNRLQHY (169 aa)). Residues 170–394 (DFVELRYTPS…LRESHPPRSQ (225 aa)) are catalytic. Q197 contacts sulfate. ATP contacts are provided by residues 197-200 (QTRN) and 291-294 (GRDH). Active-site residues include T198, R199, and N200. R199 serves as a coordination point for sulfate. A sulfate-binding site is contributed by A295. M333 lines the ATP pocket. Residues 395–573 (QGFTIFLTGY…LESQGLLDRF (179 aa)) form an allosteric regulation domain; adenylyl-sulfate kinase-like region. 3'-phosphoadenylyl sulfate is bound by residues 434 to 437 (ETVR), R451, 477 to 478 (IA), and R515.

It in the N-terminal section; belongs to the sulfate adenylyltransferase family. The protein in the C-terminal section; belongs to the APS kinase family. Homohexamer. Dimer of trimers.

Its subcellular location is the cytoplasm. The enzyme catalyses sulfate + ATP + H(+) = adenosine 5'-phosphosulfate + diphosphate. Its pathway is sulfur metabolism; hydrogen sulfide biosynthesis; sulfite from sulfate: step 1/3. Allosterically inhibited by 3'-phosphoadenosine 5'-phosphosulfate (PAPS). In terms of biological role, catalyzes the first intracellular reaction of sulfate assimilation, forming adenosine-5'-phosphosulfate (APS) from inorganic sulfate and ATP. Plays an important role in sulfate activation as a component of the biosynthesis pathway of sulfur-containing amino acids. The polypeptide is Sulfate adenylyltransferase (Chaetomium globosum (strain ATCC 6205 / CBS 148.51 / DSM 1962 / NBRC 6347 / NRRL 1970) (Soil fungus)).